Reading from the N-terminus, the 481-residue chain is Pyruvate kinase (481 aa).

Residue Arg33 coordinates substrate. K(+)-binding residues include Asn35, Ser37, Asp67, and Thr68. 35–38 (NFSH) contributes to the ATP binding site. Arg74 and Lys155 together coordinate ATP. Mg(2+) is bound at residue Glu221. The substrate site is built by Gly244, Asp245, and Thr277. Asp245 provides a ligand contact to Mg(2+).

Belongs to the pyruvate kinase family. In terms of assembly, homotetramer. The cofactor is Mg(2+). K(+) is required as a cofactor.

It carries out the reaction pyruvate + ATP = phosphoenolpyruvate + ADP + H(+). The protein operates within carbohydrate degradation; glycolysis; pyruvate from D-glyceraldehyde 3-phosphate: step 5/5. The chain is Pyruvate kinase (pyk) from Chlamydia muridarum (strain MoPn / Nigg).